A 367-amino-acid chain; its full sequence is Histidinol-phosphate aminotransferase (367 aa).

Lys221 bears the N6-(pyridoxal phosphate)lysine mark.

The protein belongs to the class-II pyridoxal-phosphate-dependent aminotransferase family. Histidinol-phosphate aminotransferase subfamily. Homodimer. Pyridoxal 5'-phosphate is required as a cofactor.

The enzyme catalyses L-histidinol phosphate + 2-oxoglutarate = 3-(imidazol-4-yl)-2-oxopropyl phosphate + L-glutamate. Its pathway is amino-acid biosynthesis; L-histidine biosynthesis; L-histidine from 5-phospho-alpha-D-ribose 1-diphosphate: step 7/9. This chain is Histidinol-phosphate aminotransferase, found in Erythrobacter litoralis (strain HTCC2594).